The chain runs to 966 residues: MAFANFRRILRLSTFEKRKSREYEHVRRDLDPNDVWEIVGELGDGAFGKVYKAKNKETGALAAAKVIETKSEEELEDYIVEIEILATCDHPYIVKLLGAYYYDGKLWIMIEFCPGGAVDAIMLELDRGLTEPQIQVVCRQMLEALNFLHGKRIIHRDLKAGNVLMTLEGDIRLADFGVSAKNLKTLQKRDSFIGTPYWMAPEVVLCETMKDAPYDYKADIWSLGITLIEMAQIEPPHHELNPMRVLLKIAKSDPPTLLTPSKWSVEFRDFLKIALDKNPETRPSAAQLLQHPFVSRVTSNKALRELVAEAKAEVMEEIEDGREDGEEEDAVDAVPPLVNHTQDSANVTQPSLDSNKLLQDSSTPLPPSQPQEPVSGSCSQPSGDGPLQTTSPADGLSKNDNDLKVPVPLRKSRPLSMDARIQMDEEKQIPDQDENPSPAASKSQKANQSRPNSSALETLGGEALTNGGLELPSSVTPSHSKRASDCSNLSTSESMDYGTSLSADLSLNKETGSLSLKGSKLHNKTLKRTRRFVVDGVEVSITTSKIISEDEKKDEEMRFLRRQELRELRLLQKEEHRNQTQLSSKHELQLEQMHKRFEQEINAKKKFYDVELENLERQQKQQVEKMEQDHSVRRKEEAKRIRLEQDRDYAKFQEQLKQMKKEVKSEVEKLPRQQRKESMKQKMEEHSQKKQRLDRDFVAKQKEDLELAMRKLTTENRREICDKERDCLSKKQELLRDREAALWEMEEHQLQERHQLVKQQLKDQYFLQRHDLLRKHEKEREQMQRYNQRMMEQLKVRQQQEKARLPKIQRSDGKTRMAMYKKSLHINGAGSASEQREKIKQFSQQEEKRQKAERLQQQQKHENQMRDMVAQCESNMSELQQLQNEKCHLLVEHETQKLKALDESHNQSLKEWRDKLRPRKKALEEDLNQKKREQEMFFKLSEEAEPRPTTPSKASNFFPYSSGDAS.

Residues serine 13 and serine 20 each carry the phosphoserine modification. Residues 36-294 (WEIVGELGDG…AAQLLQHPFV (259 aa)) form the Protein kinase domain. ATP-binding positions include 42-50 (LGDGAFGKV) and lysine 65. The active-site Proton acceptor is aspartate 157. Residues 175–224 (DFGVSAKNLKTLQKRDSFIGTPYWMAPEVVLCETMKDAPYDYKADIWSLG) are activation segment. The residue at position 185 (threonine 185) is a Phosphothreonine; by autocatalysis. Phosphoserine is present on serine 191. 2 stretches are compositionally biased toward polar residues: residues 341–363 (TQDS…DSST) and 371–392 (QEPV…TTSP). The interval 341–497 (TQDSANVTQP…NLSTSESMDY (157 aa)) is disordered. Basic and acidic residues predominate over residues 421–430 (IQMDEEKQIP). A phosphoserine mark is found at serine 437, serine 449, serine 453, and serine 484. Residues 438-456 (PAASKSQKANQSRPNSSAL) show a composition bias toward polar residues. The segment covering 485–497 (DCSNLSTSESMDY) has biased composition (polar residues). Residues serine 513 and serine 548 each carry the phosphoserine modification. Positions 588–936 (LQLEQMHKRF…LNQKKREQEM (349 aa)) form a coiled coil. Disordered regions lie at residues 660 to 692 (KKEV…KKQR), 826 to 865 (INGA…ENQM), and 901 to 966 (LDES…GDAS). Composition is skewed to basic and acidic residues over residues 834–865 (EQRE…ENQM) and 901–946 (LDES…EAEP). Phosphothreonine is present on threonine 950. The segment covering 950–966 (TPSKASNFFPYSSGDAS) has biased composition (polar residues).

The protein belongs to the protein kinase superfamily. STE Ser/Thr protein kinase family. STE20 subfamily. In terms of assembly, homodimer; homodimerization is required for activation segment autophosphorylation. In terms of processing, autophosphorylates following homodimerization, leading to activation of the protein. In terms of tissue distribution, expressed predominantly in lymphoid organs such as spleen, thymus, and bone marrow.

Its subcellular location is the cell membrane. The enzyme catalyses L-seryl-[protein] + ATP = O-phospho-L-seryl-[protein] + ADP + H(+). It catalyses the reaction L-threonyl-[protein] + ATP = O-phospho-L-threonyl-[protein] + ADP + H(+). Inhibited by the pyrrole-indolinone inhibitor SU11274 (K00593): intercalates between the ATP-binding Lys-65 and alpha-C glutamate (Glu-81), resulting in a partial disordering of the lysine side chain. Also specifically inhibited by erlotinib. Slightly inhibited by gefitinib. Serine/threonine-protein kinase involved in regulation of lymphocyte migration. Phosphorylates MSN, and possibly PLK1. Involved in regulation of lymphocyte migration by mediating phosphorylation of ERM proteins such as MSN. Acts as a negative regulator of MAP3K1/MEKK1. May also act as a cell cycle regulator by acting as a polo kinase kinase: mediates phosphorylation of PLK1 in vitro; however such data require additional evidences in vivo. The chain is Serine/threonine-protein kinase 10 (Stk10) from Mus musculus (Mouse).